A 186-amino-acid chain; its full sequence is ATP synthase subunit delta (186 aa).

It belongs to the ATPase delta chain family. In terms of assembly, F-type ATPases have 2 components, F(1) - the catalytic core - and F(0) - the membrane proton channel. F(1) has five subunits: alpha(3), beta(3), gamma(1), delta(1), epsilon(1). CF(0) has four main subunits: a(1), b(1), b'(1) and c(10-14). The alpha and beta chains form an alternating ring which encloses part of the gamma chain. F(1) is attached to F(0) by a central stalk formed by the gamma and epsilon chains, while a peripheral stalk is formed by the delta, b and b' chains.

The protein resides in the cell inner membrane. Functionally, f(1)F(0) ATP synthase produces ATP from ADP in the presence of a proton or sodium gradient. F-type ATPases consist of two structural domains, F(1) containing the extramembraneous catalytic core and F(0) containing the membrane proton channel, linked together by a central stalk and a peripheral stalk. During catalysis, ATP synthesis in the catalytic domain of F(1) is coupled via a rotary mechanism of the central stalk subunits to proton translocation. In terms of biological role, this protein is part of the stalk that links CF(0) to CF(1). It either transmits conformational changes from CF(0) to CF(1) or is implicated in proton conduction. The protein is ATP synthase subunit delta of Rhodopseudomonas palustris (strain HaA2).